The primary structure comprises 264 residues: Thymidylate synthase (264 aa).

Residue Arg-21 participates in dUMP binding. (6R)-5,10-methylene-5,6,7,8-tetrahydrofolate is bound at residue His-51. 126-127 is a binding site for dUMP; that stretch reads RR. Cys-146 serves as the catalytic Nucleophile. DUMP contacts are provided by residues 166–169, Asn-177, and 207–209; these read RSGD and HLY. Residue Asp-169 participates in (6R)-5,10-methylene-5,6,7,8-tetrahydrofolate binding. Residue Ala-263 coordinates (6R)-5,10-methylene-5,6,7,8-tetrahydrofolate.

The protein belongs to the thymidylate synthase family. Bacterial-type ThyA subfamily. Homodimer.

The protein resides in the cytoplasm. The enzyme catalyses dUMP + (6R)-5,10-methylene-5,6,7,8-tetrahydrofolate = 7,8-dihydrofolate + dTMP. The protein operates within pyrimidine metabolism; dTTP biosynthesis. In terms of biological role, catalyzes the reductive methylation of 2'-deoxyuridine-5'-monophosphate (dUMP) to 2'-deoxythymidine-5'-monophosphate (dTMP) while utilizing 5,10-methylenetetrahydrofolate (mTHF) as the methyl donor and reductant in the reaction, yielding dihydrofolate (DHF) as a by-product. This enzymatic reaction provides an intracellular de novo source of dTMP, an essential precursor for DNA biosynthesis. The chain is Thymidylate synthase from Brevibacillus brevis (strain 47 / JCM 6285 / NBRC 100599).